The primary structure comprises 135 residues: MSVNFFSLITSSWERGLFLKSCKNNSGTDSNRFFSFSVPPNLLDNLLPPLLVRKTLSSSSSKSCGIGGIYFKSSAVNVSEDGLTASTFFSILLPKNFLGITKLFCRIFLLSCPHNYKWFIHLINPFEYENFINIE.

This is an uncharacterized protein from Saccharomyces cerevisiae (strain ATCC 204508 / S288c) (Baker's yeast).